A 126-amino-acid chain; its full sequence is uncharacterized protein (126 aa).

A run of 3 helical transmembrane segments spans residues 4-24 (LIIA…VNIL), 42-62 (AITI…IINP), and 64-84 (ISAS…SYTV).

It localises to the membrane. This is an uncharacterized protein from Saccharomyces cerevisiae (strain ATCC 204508 / S288c) (Baker's yeast).